A 538-amino-acid chain; its full sequence is Bifunctional purine biosynthesis protein PurH (538 aa).

The MGS-like domain occupies 8–158 (IPAPDKVEIK…KNHAYVTTLT (151 aa)).

Belongs to the PurH family.

The enzyme catalyses (6R)-10-formyltetrahydrofolate + 5-amino-1-(5-phospho-beta-D-ribosyl)imidazole-4-carboxamide = 5-formamido-1-(5-phospho-D-ribosyl)imidazole-4-carboxamide + (6S)-5,6,7,8-tetrahydrofolate. It catalyses the reaction IMP + H2O = 5-formamido-1-(5-phospho-D-ribosyl)imidazole-4-carboxamide. The protein operates within purine metabolism; IMP biosynthesis via de novo pathway; 5-formamido-1-(5-phospho-D-ribosyl)imidazole-4-carboxamide from 5-amino-1-(5-phospho-D-ribosyl)imidazole-4-carboxamide (10-formyl THF route): step 1/1. It participates in purine metabolism; IMP biosynthesis via de novo pathway; IMP from 5-formamido-1-(5-phospho-D-ribosyl)imidazole-4-carboxamide: step 1/1. In Rhizobium johnstonii (strain DSM 114642 / LMG 32736 / 3841) (Rhizobium leguminosarum bv. viciae), this protein is Bifunctional purine biosynthesis protein PurH.